We begin with the raw amino-acid sequence, 277 residues long: Thiazole synthase (277 aa).

K119 (schiff-base intermediate with DXP) is an active-site residue. 1-deoxy-D-xylulose 5-phosphate contacts are provided by residues G180, 206–207 (AG), and 228–229 (NT).

This sequence belongs to the ThiG family. As to quaternary structure, homotetramer. Forms heterodimers with either ThiH or ThiS.

Its subcellular location is the plastid. The protein resides in the chloroplast. It carries out the reaction [ThiS sulfur-carrier protein]-C-terminal-Gly-aminoethanethioate + 2-iminoacetate + 1-deoxy-D-xylulose 5-phosphate = [ThiS sulfur-carrier protein]-C-terminal Gly-Gly + 2-[(2R,5Z)-2-carboxy-4-methylthiazol-5(2H)-ylidene]ethyl phosphate + 2 H2O + H(+). It participates in cofactor biosynthesis; thiamine diphosphate biosynthesis. Catalyzes the rearrangement of 1-deoxy-D-xylulose 5-phosphate (DXP) to produce the thiazole phosphate moiety of thiamine. Sulfur is provided by the thiocarboxylate moiety of the carrier protein ThiS. In vitro, sulfur can be provided by H(2)S. This chain is Thiazole synthase, found in Porphyra purpurea (Red seaweed).